We begin with the raw amino-acid sequence, 453 residues long: Nuclear and cytoplasmic polyadenylated RNA-binding protein PUB1 (453 aa).

Residues 1 to 67 (MSENNEEQHQ…PSVVPANAIT (67 aa)) form a disordered region. The residue at position 2 (serine 2) is an N-acetylserine. RRM domains follow at residues 75-152 (RVLY…WAFQ) and 162-240 (FNLF…WAAK). The tract at residues 241-262 (RDNNNNNNYQQRRNYGNNNRGG) is disordered. The segment covering 244-262 (NNNNNYQQRRNYGNNNRGG) has biased composition (low complexity). Residue arginine 260 is modified to Omega-N-methylarginine. An RNA-binding RGG-box region spans residues 260–264 (RGGFR). An RRM 3 domain is found at 341–413 (TTAYIGNIPH…RNLRTGWGKE (73 aa)). Residues 419-453 (PQQQQQGGQPLIMNDQQQPVMSEQQQQQQQQQQQQ) form a disordered region. Positions 434–453 (QQQPVMSEQQQQQQQQQQQQ) are enriched in low complexity.

Interacts with NAB2.

The protein localises to the cytoplasm. Its subcellular location is the nucleus. The protein resides in the P-body. It is found in the stress granule. Functionally, may be associated with hnRNA within the nucleus and remains associated during nucleocytoplasmic mRNA transport, once the proteins are in the cytoplasm, disassembly of PUB1-RNA complexes may occur prior to PAB1 binding and formation of a translationally competent RNP complex. Binds to polyadenylated RNA; prefers to bind poly(rU); binds to T-rich single-stranded DNA. The chain is Nuclear and cytoplasmic polyadenylated RNA-binding protein PUB1 from Saccharomyces cerevisiae (strain ATCC 204508 / S288c) (Baker's yeast).